We begin with the raw amino-acid sequence, 619 residues long: Chaperone protein DnaK (619 aa).

A Phosphothreonine; by autocatalysis modification is found at threonine 175. Residues 578–619 are disordered; sequence NGGAQGEGFDPNNMGGANAGTGAANSNDDNVVDADFEVQDDK. A compositionally biased stretch (low complexity) spans 589 to 606; that stretch reads NNMGGANAGTGAANSNDD. Residues 607–619 are compositionally biased toward acidic residues; the sequence is NVVDADFEVQDDK.

Belongs to the heat shock protein 70 family.

Functionally, acts as a chaperone. The sequence is that of Chaperone protein DnaK from Clostridium perfringens (strain SM101 / Type A).